The primary structure comprises 412 residues: Transforming growth factor beta-3 proprotein (412 aa).

The signal sequence occupies residues 1-23; sequence MKMHLQRALVVLALLNLATVSLS. N-linked (GlcNAc...) asparagine glycans are attached at residues Asn-74, Asn-135, and Asn-142. Positions 261–263 match the Cell attachment site motif; the sequence is RGD. Gln-293 is subject to N5-methylglutamine. Cystine bridges form between Cys-307–Cys-316, Cys-315–Cys-378, Cys-344–Cys-409, and Cys-348–Cys-411.

It belongs to the TGF-beta family. In terms of assembly, interacts with ASPN. Latency-associated peptide: Homodimer; disulfide-linked. Latency-associated peptide: Interacts with Transforming growth factor beta-3 (TGF-beta-3) chain; interaction is non-covalent and maintains (TGF-beta-3) in a latent state. Latency-associated peptide: Interacts with LRRC32/GARP; leading to regulate activation of TGF-beta-3 and promote epithelial fusion during palate development. Latency-associated peptide: Interacts (via cell attachment site) with integrins, leading to release of the active TGF-beta-3. Transforming growth factor beta-3: Homodimer; disulfide-linked. Transforming growth factor beta-3: Interacts with TGF-beta receptors (TGFBR1 and TGFBR2), leading to signal transduction. Transforming growth factor beta-3 proprotein: The precursor proprotein is cleaved in the Golgi apparatus to form Transforming growth factor beta-3 (TGF-beta-3) and Latency-associated peptide (LAP) chains, which remain non-covalently linked, rendering TGF-beta-3 inactive. In terms of processing, methylated at Gln-293 by N6AMT1. As to expression, expressed in cardiomyocytes.

Its subcellular location is the secreted. It localises to the extracellular space. The protein resides in the extracellular matrix. In terms of biological role, transforming growth factor beta-3 proprotein: Precursor of the Latency-associated peptide (LAP) and Transforming growth factor beta-3 (TGF-beta-3) chains, which constitute the regulatory and active subunit of TGF-beta-3, respectively. Functionally, required to maintain the Transforming growth factor beta-3 (TGF-beta-3) chain in a latent state during storage in extracellular matrix. Associates non-covalently with TGF-beta-3 and regulates its activation via interaction with 'milieu molecules', such as LTBP1 and LRRC32/GARP, that control activation of TGF-beta-3. Interaction with integrins results in distortion of the Latency-associated peptide chain and subsequent release of the active TGF-beta-3. Its function is as follows. Transforming growth factor beta-3: Multifunctional protein that regulates embryogenesis and cell differentiation and is required in various processes such as secondary palate development. Activation into mature form follows different steps: following cleavage of the proprotein in the Golgi apparatus, Latency-associated peptide (LAP) and Transforming growth factor beta-3 (TGF-beta-3) chains remain non-covalently linked rendering TGF-beta-3 inactive during storage in extracellular matrix. At the same time, LAP chain interacts with 'milieu molecules', such as LTBP1 and LRRC32/GARP that control activation of TGF-beta-3 and maintain it in a latent state during storage in extracellular milieus. TGF-beta-3 is released from LAP by integrins: integrin-binding results in distortion of the LAP chain and subsequent release of the active TGF-beta-3. Once activated following release of LAP, TGF-beta-3 acts by binding to TGF-beta receptors (TGFBR1 and TGFBR2), which transduce signal. This is Transforming growth factor beta-3 proprotein (Tgfb3) from Rattus norvegicus (Rat).